The following is a 426-amino-acid chain: Tyrosine--tRNA ligase (426 aa).

Tyr-38 serves as a coordination point for L-tyrosine. A 'HIGH' region motif is present at residues 43–52 (PTADSLHIGS). The L-tyrosine site is built by Tyr-176 and Gln-180. Residues 236–240 (KFGKT) carry the 'KMSKS' region motif. Lys-239 is a binding site for ATP. Residues 359-426 (QTIVEVLTQS…KKLFNLYIWK (68 aa)) enclose the S4 RNA-binding domain.

This sequence belongs to the class-I aminoacyl-tRNA synthetase family. TyrS type 1 subfamily. In terms of assembly, homodimer.

It is found in the cytoplasm. It carries out the reaction tRNA(Tyr) + L-tyrosine + ATP = L-tyrosyl-tRNA(Tyr) + AMP + diphosphate + H(+). Its function is as follows. Catalyzes the attachment of tyrosine to tRNA(Tyr) in a two-step reaction: tyrosine is first activated by ATP to form Tyr-AMP and then transferred to the acceptor end of tRNA(Tyr). This Aliivibrio fischeri (strain ATCC 700601 / ES114) (Vibrio fischeri) protein is Tyrosine--tRNA ligase.